The primary structure comprises 40 residues: Alpha-conotoxin-like Qc1.4b (40 aa).

Positions 1 to 19 are excised as a propeptide; the sequence is SDGRNTAANDKASDLMALR. 2 disulfide bridges follow: C22–C28 and C23–C36. The segment at 24–26 is lacks the Ser-Xaa-Pro motif that is crucial for potent interaction with nAChR; the sequence is PNP. Position 36 is a cysteine amide (C36). Positions 37 to 40 are excised as a propeptide; the sequence is GGGR.

This sequence belongs to the conotoxin A superfamily. In terms of tissue distribution, expressed by the venom duct.

It is found in the secreted. Its function is as follows. Alpha-conotoxins act on postsynaptic membranes, they bind to the nicotinic acetylcholine receptors (nAChR) and thus inhibit them. Has possibly a distinct nAChR binding mode from other alpha-conotoxins, due to a different three residue motif (lacks the Ser-Xaa-Pro motif). This chain is Alpha-conotoxin-like Qc1.4b, found in Conus quercinus (Oak cone).